Reading from the N-terminus, the 133-residue chain is Large ribosomal subunit protein bL17 (133 aa).

The protein belongs to the bacterial ribosomal protein bL17 family. In terms of assembly, part of the 50S ribosomal subunit. Contacts protein L32.

The chain is Large ribosomal subunit protein bL17 from Pseudoalteromonas translucida (strain TAC 125).